Here is a 498-residue protein sequence, read N- to C-terminus: Probable malate:quinone oxidoreductase 2 (498 aa).

It belongs to the MQO family. It depends on FAD as a cofactor.

It catalyses the reaction (S)-malate + a quinone = a quinol + oxaloacetate. It functions in the pathway carbohydrate metabolism; tricarboxylic acid cycle; oxaloacetate from (S)-malate (quinone route): step 1/1. This is Probable malate:quinone oxidoreductase 2 from Staphylococcus epidermidis (strain ATCC 12228 / FDA PCI 1200).